We begin with the raw amino-acid sequence, 315 residues long: Gamma-hemolysin component C (315 aa).

Residues 1-29 form the signal peptide; sequence MLKNKILATTLSVSLLAPLANPLLENAKA.

It belongs to the aerolysin family. As to quaternary structure, toxicity requires sequential binding and synergistic association of a class S and a class F component which form heterooligomeric complexes. HlgC (class S) associates with HlgB (class F) thus forming an CB toxin.

Toxin that seems to act by forming pores in the membrane of the cell. Has a hemolytic and a leucotoxic activity. This chain is Gamma-hemolysin component C (hlgC), found in Staphylococcus aureus (strain MSSA476).